The primary structure comprises 146 residues: MDSYKTQWLTSEGDERVRCELLAFGTVEDLERGTLNAQDRNVLVKLSILNYVYGKQVVTFDALLKNYAQAGIELTDNDIEMILLELCNHGIMDVSIDSVAREVKVLQLSRYRDVYCGERELLVVNPTKVITNIEIIDTLQAYSDKL.

Residues 1-107 (MDSYKTQWLT…SVAREVKVLQ (107 aa)) enclose the PCI domain.

In terms of assembly, component of a COP9 signalosome-like (CSN) complex.

It is found in the cytoplasm. The protein localises to the nucleus. Its function is as follows. Component of the COP9 signalosome (CSN) complex that acts as a regulator of the ubiquitin (Ubl) conjugation pathway by mediating the deneddylation of the cullin subunit of SCF-type E3 ubiquitin-protein ligase complexes. The CSN complex is involved in the regulation of the mating pheromone response. This chain is COP9 signalosome complex subunit 9 (CSN9), found in Candida glabrata (strain ATCC 2001 / BCRC 20586 / JCM 3761 / NBRC 0622 / NRRL Y-65 / CBS 138) (Yeast).